The primary structure comprises 427 residues: Zinc finger protein 2 (427 aa).

A KRAB domain is found at 14 to 85 (VTFEDVAVTF…GFHGSEEKTW (72 aa)). The interval 111 to 142 (HRKQSSLCPKREIQTLTGGPEPEKESPKARTC) is disordered. 8 C2H2-type zinc fingers span residues 169–191 (QECSECGKTFFDHSSLIRHQRTH), 197–219 (YDCPECGKAFSHRSSLSRHLMFH), 225–247 (YECDACGKAFFDRSSLTVHQRIH), 253–275 (FKCNDCGKAFFDRSSLTRHQRIH), 281–303 (YECQQCGKAFSQKSILTRHLLTH), 309–331 (YECRDCGKAFYGVTSLNRHQKVH), 337–359 (YQCSECGKAFFDRSSLTQHQKIH), and 365–387 (YECGECGKAFSQRCRLTRHQRVH). The C2H2-type 9; degenerate zinc-finger motif lies at 393 to 415 (FECSVCGKEFSSKSSIIQHQRRY).

Belongs to the krueppel C2H2-type zinc-finger protein family.

It is found in the nucleus. In terms of biological role, may be involved in transcriptional regulation. The sequence is that of Zinc finger protein 2 from Mus musculus (Mouse).